The primary structure comprises 609 residues: MDYDKLSKDILQLVGGEENVQRVIHCMTRLRFNLHDNAKADRSQLEQLPGVMGTNISGEQFQIIIGNDVPKVYQAIVRHSNLSDEKSAGSSSQKKNVLSAVFDVISGVFTPILPAIAGAGMIKGLVALAVTFGWMAEKSQVHVILTAVGDGAFYFLPLLLAMSAARKFGSNPYVAAAIAAAILHPDLTALLGAGKPISFIGLPVTAATYSSTVIPILLSIWIASYVEKWIDRFTHASLKLIVVPTFTLLIVVPLTLITVGPLGAILGEYLSSGVNYLFDHAGLVAMILLAGTFSLIIMTGMHYAFVPIMINNIAQNGHDYLLPAMFLANMGQAGASFAVFLRSRNKKFKSLALTTSITALMGITEPAMYGVNMRLKKPFAAALIGGAAGGAFYGMTGVASYIVGGNAGLPSIPVFIGPTFIYAMIGLVIAFAAGTAAAYLLGFEDVPSDGSQQPAVHEGSREIIHSPIKGEVKALSEVKDGVFSAGVMGKGFAIEPEEGEVVSPVRGSVTTIFKTKHAIGITSDQGAEILIHIGLDTVKLEGQWFTAHIKEGDKVAPGDPLVSFDLEQIKAAGYDVITPVIVTNTDQYSFSPVKEIGKVQPKEALLALS.

The PTS EIIB type-1 domain occupies 1–86; sequence MDYDKLSKDI…VRHSNLSDEK (86 aa). Residue C26 is the Phosphocysteine intermediate; for EIIB activity of the active site. The region spanning 103 to 459 is the PTS EIIC type-1 domain; the sequence is DVISGVFTPI…GSQQPAVHEG (357 aa). 10 helical membrane passes run 112–132, 141–161, 174–194, 202–222, 246–266, 281–301, 321–341, 351–371, 379–399, and 412–432; these read ILPA…AVTF, VHVI…LLLA, VAAA…LGAG, LPVT…SIWI, FTLL…GAIL, AGLV…MTGM, LLPA…AVFL, LALT…MYGV, FAAA…TGVA, and IPVF…IAFA. The 105-residue stretch at 480-584 folds into the PTS EIIA type-1 domain; sequence DGVFSAGVMG…DVITPVIVTN (105 aa). The active-site Tele-phosphohistidine intermediate; for EIIA activity is the H532.

The protein localises to the cell membrane. Its function is as follows. The phosphoenolpyruvate-dependent sugar phosphotransferase system (sugar PTS), a major carbohydrate active -transport system, catalyzes the phosphorylation of incoming sugar substrates concomitantly with their translocation across the cell membrane. This system is involved in beta-glucoside transport. This is PTS system beta-glucoside-specific EIIBCA component (bglP) from Bacillus subtilis (strain 168).